The sequence spans 135 residues: Large ribosomal subunit protein uL16c (135 aa).

This sequence belongs to the universal ribosomal protein uL16 family. In terms of assembly, part of the 50S ribosomal subunit.

It is found in the plastid. The protein localises to the chloroplast. In Jasminum nudiflorum (Winter jasmine), this protein is Large ribosomal subunit protein uL16c.